The following is a 446-amino-acid chain: Iroquois-class homeodomain protein IRX-6 (446 aa).

Positions 146 to 208 form a DNA-binding region, homeobox; that stretch reads GAGRRKNATR…NARRRLKKEN (63 aa). 2 disordered regions span residues 208–273 and 362–394; these read NKMT…EDEE and AVEG…RLSV. Residues 217–226 show a composition bias toward basic and acidic residues; it reads KGGEERKAEG. Acidic residues predominate over residues 256–273; that stretch reads LEDLEEEEEEEEEAEDEE.

Belongs to the TALE/IRO homeobox family.

The protein localises to the nucleus. In terms of biological role, transcription factor. Binds to the iroquois binding site (IBS) motif of target genes to regulate gene expression; functions as a transcriptional activator or repressor. Modulates expression of RCVRN, VSX1, BHLHE22/BHLHB5 and TACR3/Nk3r. Required downstream of retinal bipolar cell specification for the terminal differentiation of type 2, type 3a and possibly type 6 bipolar cells. The chain is Iroquois-class homeodomain protein IRX-6 (IRX6) from Homo sapiens (Human).